A 445-amino-acid polypeptide reads, in one-letter code: 3-phosphoshikimate 1-carboxyvinyltransferase (445 aa).

Residues 1 to 20 form a disordered region; it reads MSTSAAPTPLESRASGPLSG. Residues Lys-28, Ser-29, and Arg-33 each contribute to the 3-phosphoshikimate site. Lys-28 is a phosphoenolpyruvate binding site. Residues Gly-101 and Arg-129 each coordinate phosphoenolpyruvate. Residues Ser-175, Gln-177, Asp-328, and Lys-355 each contribute to the 3-phosphoshikimate site. Gln-177 serves as a coordination point for phosphoenolpyruvate. The Proton acceptor role is filled by Asp-328. Residues Arg-359 and Arg-402 each contribute to the phosphoenolpyruvate site.

The protein belongs to the EPSP synthase family. As to quaternary structure, monomer.

It localises to the cytoplasm. It catalyses the reaction 3-phosphoshikimate + phosphoenolpyruvate = 5-O-(1-carboxyvinyl)-3-phosphoshikimate + phosphate. It participates in metabolic intermediate biosynthesis; chorismate biosynthesis; chorismate from D-erythrose 4-phosphate and phosphoenolpyruvate: step 6/7. In terms of biological role, catalyzes the transfer of the enolpyruvyl moiety of phosphoenolpyruvate (PEP) to the 5-hydroxyl of shikimate-3-phosphate (S3P) to produce enolpyruvyl shikimate-3-phosphate and inorganic phosphate. The polypeptide is 3-phosphoshikimate 1-carboxyvinyltransferase (Bradyrhizobium sp. (strain ORS 278)).